Here is a 252-residue protein sequence, read N- to C-terminus: MAIRAAGTYVSKNKGAKRGKAKGKENRFSKNKFYNLTSRLFPITNHGTTSHPKMRSKQDLTPFLVGRTFSVNQGDLECADPMNAVNSPRYFKFKVNAVCGNNCNSVFNGMEVSREKITGMIRKWHTLIEANIPITTKDGSTWRVFVNAVTKKKNPDSLKHYAKASEIKIIRKRIVETTLEHLDGIEVEKLVKVLSTEGLAKEFETRCNEIYPIFAMIIKVKPIKNMQCIIVKTRSDDPAHLESDNKSDLENE.

The protein belongs to the eukaryotic ribosomal protein eS1 family. In terms of assembly, component of the small ribosomal subunit. Mature ribosomes consist of a small (40S) and a large (60S) subunit. The 40S subunit contains about 33 different proteins and 1 molecule of RNA (18S). The 60S subunit contains about 49 different proteins and 3 molecules of RNA (25S, 5.8S and 5S).

The protein resides in the cytoplasm. This chain is Small ribosomal subunit protein eS1, found in Enterocytozoon bieneusi (strain H348) (Microsporidian parasite).